Reading from the N-terminus, the 390-residue chain is ATP phosphoribosyltransferase regulatory subunit (390 aa).

This sequence belongs to the class-II aminoacyl-tRNA synthetase family. HisZ subfamily. In terms of assembly, heteromultimer composed of HisG and HisZ subunits.

It localises to the cytoplasm. It functions in the pathway amino-acid biosynthesis; L-histidine biosynthesis; L-histidine from 5-phospho-alpha-D-ribose 1-diphosphate: step 1/9. Functionally, required for the first step of histidine biosynthesis. May allow the feedback regulation of ATP phosphoribosyltransferase activity by histidine. The sequence is that of ATP phosphoribosyltransferase regulatory subunit from Bacillus velezensis (strain DSM 23117 / BGSC 10A6 / LMG 26770 / FZB42) (Bacillus amyloliquefaciens subsp. plantarum).